A 219-amino-acid polypeptide reads, in one-letter code: Large ribosomal subunit protein uL1 (219 aa).

This sequence belongs to the universal ribosomal protein uL1 family. As to quaternary structure, part of the 50S ribosomal subunit.

In terms of biological role, probably involved in E site tRNA release. Binds directly to 23S rRNA. Functionally, protein L1 is also a translational repressor protein, it controls the translation of its operon by binding to its mRNA. In Methanocaldococcus jannaschii (strain ATCC 43067 / DSM 2661 / JAL-1 / JCM 10045 / NBRC 100440) (Methanococcus jannaschii), this protein is Large ribosomal subunit protein uL1.